The chain runs to 611 residues: O-fucosyltransferase 8 (611 aa).

The disordered stretch occupies residues 1–29; it reads MGKQGSPRSPRPETIDKEEKFGRRSLDSL. Positions 10–26 are enriched in basic and acidic residues; it reads PRPETIDKEEKFGRRSL. Residues 78 to 98 form a helical; Signal-anchor for type II membrane protein membrane-spanning segment; it reads IVLMISVTGFIFCMDSIMVSI. N115, N216, and N270 each carry an N-linked (GlcNAc...) asparagine glycan. 386–388 lines the substrate pocket; that stretch reads HLR. A glycan (N-linked (GlcNAc...) asparagine) is linked at N506.

The protein belongs to the glycosyltransferase GT106 family.

The protein localises to the membrane. It participates in glycan metabolism. The sequence is that of O-fucosyltransferase 8 from Arabidopsis thaliana (Mouse-ear cress).